Here is a 129-residue protein sequence, read N- to C-terminus: uncharacterized protein (129 aa).

3 helical membrane-spanning segments follow: residues 22–42, 55–75, and 88–108; these read LASS…FFFF, VGSF…FFFF, and LPFT…FFFF.

It is found in the membrane. This is an uncharacterized protein from Saccharomyces cerevisiae (strain ATCC 204508 / S288c) (Baker's yeast).